A 212-amino-acid chain; its full sequence is Ribonuclease HII (212 aa).

The RNase H type-2 domain maps to 12 to 201 (ELVAGVDEVG…VRAMLEQVSI (190 aa)). 3 residues coordinate a divalent metal cation: D18, E19, and D110.

Belongs to the RNase HII family. Requires Mn(2+) as cofactor. Mg(2+) is required as a cofactor.

The protein localises to the cytoplasm. The enzyme catalyses Endonucleolytic cleavage to 5'-phosphomonoester.. Functionally, endonuclease that specifically degrades the RNA of RNA-DNA hybrids. The sequence is that of Ribonuclease HII from Stutzerimonas stutzeri (strain A1501) (Pseudomonas stutzeri).